The following is a 1080-amino-acid chain: Zorya protein ZorD (1080 aa).

Residues 596-779 (LRSPEETAGC…WSLFDFAQPG (184 aa)) enclose the Helicase ATP-binding domain. In terms of domain architecture, Helicase C-terminal spans 904-1069 (KLNWLLKILA…DMLCATPDLS (166 aa)).

Component of antiviral defense system Zorya type I, composed of ZorA, ZorB, ZorC and ZorD. Expression of Zorya type I in E.coli (strain MG1655) confers 10,000-fold resistance to phage SECphi27, 100-fold resistance to lambda, and 10-fold resistance to T7. While most T7 infected Zorya-containing cells undergo abortive infection, a minority produce viable phage progeny. These eventually accumulate to a high multiplicity of infection, leading to culture collapse by 2 hours after initial infection. ZorA and ZorB probably assemble in the cell inner membrane and exert their effect there. This may have ATPase activity. The protein is Zorya protein ZorD of Escherichia coli O139:H28 (strain E24377A / ETEC).